The primary structure comprises 553 residues: Putative transport protein YidE (553 aa).

A run of 5 helical transmembrane segments spans residues 4–24, 28–48, 65–85, 95–115, and 158–178; these read IALTVSILALVAVVGLFIGNV, GVGLGIGGVLFGGIIVGHFVS, FGLILFVYTIGIQVGPGFFAS, LFAVLIVIIGGLVTAILHKLF, and MSYAMAYPFGICGILFTMWML. RCK C-terminal domains are found at residues 191-276 and 279-361; these read QQHE…VIGQ and DTSL…VLGN. Transmembrane regions (helical) follow at residues 371–391, 393–413, 439–459, 464–484, 493–513, and 533–553; these read MLPVFIGIGLGVLLGSIPVFV, GFPAALKLGLAGGPLIMALIL, IVLFLSVVGLKSGGDFIHTLV, LSWIGYGALITAVPLITVGIL, YLTMCGMLAGSMTDPPALAFA, and LVMFLRIITPQLLAVLFWSIG.

This sequence belongs to the AAE transporter (TC 2.A.81) family. YidE subfamily.

It is found in the cell membrane. The chain is Putative transport protein YidE from Escherichia coli O127:H6 (strain E2348/69 / EPEC).